The primary structure comprises 159 residues: Transcriptional repressor NrdR (159 aa).

A zinc finger lies at 3 to 34 (CPFCGGVENKVMDSRVSRDGNAIRRRRECLAC). The ATP-cone domain occupies 49 to 139 (PTVVKKDGRR…VYRQFRDVND (91 aa)).

Belongs to the NrdR family. It depends on Zn(2+) as a cofactor.

Negatively regulates transcription of bacterial ribonucleotide reductase nrd genes and operons by binding to NrdR-boxes. In Syntrophus aciditrophicus (strain SB), this protein is Transcriptional repressor NrdR.